Here is a 395-residue protein sequence, read N- to C-terminus: MFSSRDKAEVKLYFDSNNEENQKILDQCPHLYQKYDKDVTINDRINNIEDSEPTIKNGVTFYPPYYLYNSHFMNYYGSYKIPKLNLKTRREILVNPIDGGTISLDFFELGEFKEDTPTIVINHGLTGGSHERYVQYFAQRAYKEKGFRSVVFNYRGCAGNPITADRAYSAVQLDDIKFVTEYLTKTALPLVKKWFLVGFSLGSAILVNYMADAGKDSPYLAHVSISNPMNMVECTKNLSSTYINNLIYNKGLANNLKRLFRKFDGRLDKYATKEQIMAAQTIADFDDLITSKMFGFETAHDYYLAASSSKSIRNLVKPILFINAIDDPIAPTSGFPWKDFKSNPNTILCVSRWGGHLGFISYEDHMSWSDKAAVEYLSTFLDDNNNNNDNDNKTE.

One can recognise an AB hydrolase-1 domain in the interval 117–331 (PTIVINHGLT…INAIDDPIAP (215 aa)). Residues Ser200, Asp327, and His356 each act as charge relay system in the active site.

Belongs to the AB hydrolase superfamily. AB hydrolase 4 family.

The polypeptide is Abhydrolase domain-containing protein (abhd) (Dictyostelium discoideum (Social amoeba)).